The primary structure comprises 162 residues: uncharacterized protein (162 aa).

The disordered stretch occupies residues 1 to 49 (MNSRTASARGWFSSRPPTSESDLEPATDGPASETTTLSPEATTFNDTRI). The segment covering 32 to 46 (SETTTLSPEATTFND) has biased composition (polar residues). A helical transmembrane segment spans residues 62–82 (MLLSFGIITVIGLAVALVLYI).

It is found in the membrane. This is an uncharacterized protein from Homo sapiens (Human).